Consider the following 416-residue polypeptide: Formyl-CoA:oxalate CoA-transferase (416 aa).

Residues 17-18, R38, 72-75, 96-98, H104, and 137-140 contribute to the CoA site; these read QS, LNTK, NFH, and KAYE. D169 (nucleophile) is an active-site residue. 248–250 provides a ligand contact to substrate; sequence GGQ. 273-275 contributes to the CoA binding site; sequence QEQ.

It belongs to the CoA-transferase III family. Frc subfamily. As to quaternary structure, homodimer.

The catalysed reaction is formyl-CoA + oxalate = oxalyl-CoA + formate. It participates in metabolic intermediate degradation; oxalate degradation; CO(2) and formate from oxalate: step 1/2. Its function is as follows. Involved in the catabolism of oxalate and in the adapatation to low pH via the induction of the oxalate-dependent acid tolerance response (ATR). Catalyzes the transfer of the CoA moiety from formyl-CoA to oxalate. This is Formyl-CoA:oxalate CoA-transferase from Shigella boydii serotype 18 (strain CDC 3083-94 / BS512).